We begin with the raw amino-acid sequence, 506 residues long: Aldehyde dehydrogenase (506 aa).

240 to 245 (GSTEIG) contributes to the NAD(+) binding site. Catalysis depends on residues Glu262 and Cys301.

Belongs to the aldehyde dehydrogenase family.

The enzyme catalyses an aldehyde + NAD(+) + H2O = a carboxylate + NADH + 2 H(+). It participates in alcohol metabolism; ethanol degradation; acetate from ethanol: step 2/2. Functionally, may be involved in V.cholerae virulence, as its expression is under the control of ToxR, a transcriptional activator of several genes associated with virulence. The protein is Aldehyde dehydrogenase (aldA) of Vibrio cholerae serotype O1 (strain ATCC 39541 / Classical Ogawa 395 / O395).